The primary structure comprises 338 residues: uncharacterized protein (338 aa).

Positions 1 to 29 (MIKQLYKNITICTLALSTTFTVLPATSYA) are cleaved as a signal peptide.

Belongs to the aerolysin family.

This is an uncharacterized protein from Staphylococcus aureus (strain MSSA476).